The following is a 486-amino-acid chain: tRNA-2-methylthio-N(6)-dimethylallyladenosine synthase (486 aa).

Positions 35–151 (RNLYVESYGC…LPRLLATVDS (117 aa)) constitute an MTTase N-terminal domain. 6 residues coordinate [4Fe-4S] cluster: C44, C80, C114, C189, C193, and C196. The region spanning 175–419 (NSNGVSAFIS…IDKQRQHSFE (245 aa)) is the Radical SAM core domain. One can recognise a TRAM domain in the interval 422-485 (LKDIGKVYQV…TGTLLGEICT (64 aa)).

This sequence belongs to the methylthiotransferase family. MiaB subfamily. Monomer. It depends on [4Fe-4S] cluster as a cofactor.

The protein resides in the cytoplasm. It carries out the reaction N(6)-dimethylallyladenosine(37) in tRNA + (sulfur carrier)-SH + AH2 + 2 S-adenosyl-L-methionine = 2-methylsulfanyl-N(6)-dimethylallyladenosine(37) in tRNA + (sulfur carrier)-H + 5'-deoxyadenosine + L-methionine + A + S-adenosyl-L-homocysteine + 2 H(+). Catalyzes the methylthiolation of N6-(dimethylallyl)adenosine (i(6)A), leading to the formation of 2-methylthio-N6-(dimethylallyl)adenosine (ms(2)i(6)A) at position 37 in tRNAs that read codons beginning with uridine. This Amoebophilus asiaticus (strain 5a2) protein is tRNA-2-methylthio-N(6)-dimethylallyladenosine synthase.